Consider the following 196-residue polypeptide: Rho-related protein racA (196 aa).

GTP contacts are provided by alanine 13, glycine 15, lysine 16, threonine 17, cysteine 18, tyrosine 32, threonine 35, glycine 60, lysine 116, aspartate 118, and alanine 159. A Mg(2+)-binding site is contributed by threonine 17. 2 consecutive short sequence motifs (switch) follow at residues 26–37 (NAFPNEYIPTVF) and 57–75 (DTAG…YPQT). Threonine 35 contacts Mg(2+). Cysteine 193 carries the post-translational modification Cysteine methyl ester. Residue cysteine 193 is the site of S-geranylgeranyl cysteine attachment. Residues 194 to 196 (LLF) constitute a propeptide, removed in mature form.

This sequence belongs to the small GTPase superfamily. Rho family. As to quaternary structure, interacts (GTP-bound form) with PAK2 (via CRIB domain). Mg(2+) is required as a cofactor.

Its subcellular location is the cell membrane. The protein resides in the cytoplasm. It is found in the cytoskeleton. The enzyme catalyses GTP + H2O = GDP + phosphate + H(+). Its activity is regulated as follows. Regulated by guanine nucleotide exchange factors (GEFs) which promote the exchange of bound GDP for free GTP, GTPase activating proteins (GAPs) which increase the GTP hydrolysis activity, and GDP dissociation inhibitors which inhibit the dissociation of the nucleotide from the GTPase. Functionally, small GTPase which cycles between active GTP-bound and inactive GDP-bound states. Involved in cytoskeleton remodeling. Plays a role in phagocytosis of bacteria and host erythrocytes. Involved in capping of surface receptors. May be involved in cytokinesis. This chain is Rho-related protein racA, found in Entamoeba histolytica (strain ATCC 30459 / HM-1:IMSS / ABRM).